Here is a 432-residue protein sequence, read N- to C-terminus: Adenylosuccinate synthetase (432 aa).

GTP contacts are provided by residues 13–19 and 41–43; these read GDEGKGK and GHT. Catalysis depends on D14, which acts as the Proton acceptor. Mg(2+)-binding residues include D14 and G41. Residues 14–17, 39–42, T130, R144, Q225, T240, and R304 contribute to the IMP site; these read DEGK and NAGH. Catalysis depends on H42, which acts as the Proton donor. 300-306 serves as a coordination point for substrate; it reads ATTGRRR. GTP contacts are provided by residues R306, 332–334, and 415–417; these read KLD and STG.

This sequence belongs to the adenylosuccinate synthetase family. Homodimer. It depends on Mg(2+) as a cofactor.

It is found in the cytoplasm. It carries out the reaction IMP + L-aspartate + GTP = N(6)-(1,2-dicarboxyethyl)-AMP + GDP + phosphate + 2 H(+). The protein operates within purine metabolism; AMP biosynthesis via de novo pathway; AMP from IMP: step 1/2. Functionally, plays an important role in the de novo pathway of purine nucleotide biosynthesis. Catalyzes the first committed step in the biosynthesis of AMP from IMP. In Enterobacter sp. (strain 638), this protein is Adenylosuccinate synthetase.